The chain runs to 295 residues: Probable protein phosphatase 2C 54 (295 aa).

In terms of domain architecture, PPM-type phosphatase spans 78 to 289; it reads GHGVVSVMGR…ENINVIVIDL (212 aa). Mn(2+) is bound by residues aspartate 112, glycine 113, aspartate 228, and glutamate 280.

It belongs to the PP2C family. It depends on Mg(2+) as a cofactor. Mn(2+) serves as cofactor.

The enzyme catalyses O-phospho-L-seryl-[protein] + H2O = L-seryl-[protein] + phosphate. It catalyses the reaction O-phospho-L-threonyl-[protein] + H2O = L-threonyl-[protein] + phosphate. The sequence is that of Probable protein phosphatase 2C 54 from Arabidopsis thaliana (Mouse-ear cress).